The primary structure comprises 388 residues: Beta-hexosaminidase LpqI (388 aa).

Positions 1–19 (MAFPRTLAILAAAAALVVA) are cleaved as a signal peptide. The N-palmitoyl cysteine moiety is linked to residue Cys-20. The S-diacylglycerol cysteine moiety is linked to residue Cys-20. Substrate contacts are provided by residues Asp-123, Arg-131, Arg-193, and 223 to 224 (KH). The Proton donor/acceptor role is filled by His-236. Asp-311 acts as the Nucleophile in catalysis.

Belongs to the glycosyl hydrolase 3 family.

The protein resides in the cell inner membrane. It carries out the reaction Hydrolysis of terminal non-reducing N-acetyl-D-hexosamine residues in N-acetyl-beta-D-hexosaminides.. Its pathway is cell wall biogenesis; peptidoglycan recycling. Functionally, plays a role in peptidoglycan recycling by cleaving the terminal beta-1,4-linked N-acetylglucosamine (GlcNAc) from peptidoglycan fragments. Acts as a regulator for GlcNAc-MurNAc levels by cleaving disaccharides and allowing the breakdown of MurNAc. The sequence is that of Beta-hexosaminidase LpqI from Mycobacterium tuberculosis (strain ATCC 25618 / H37Rv).